An 822-amino-acid chain; its full sequence is Putative ESX-1 scaffolding and assembly protein SaeB (822 aa).

May be involved in assembly of the ESX-1 / type VII specialized secretion system (T7SS), which exports several proteins including EsxA and EsxB. Involved in DNA conjugation in recipient (MDK8) but not donor (mc(2)155) strain. This Mycolicibacterium smegmatis (strain ATCC 700084 / mc(2)155) (Mycobacterium smegmatis) protein is Putative ESX-1 scaffolding and assembly protein SaeB.